The following is a 164-amino-acid chain: NADPH-dependent 7-cyano-7-deazaguanine reductase (164 aa).

Cysteine 55 acts as the Thioimide intermediate in catalysis. Aspartate 62 serves as the catalytic Proton donor. Substrate is bound by residues 77 to 79 and 96 to 97; these read VES and HE.

It belongs to the GTP cyclohydrolase I family. QueF type 1 subfamily.

It is found in the cytoplasm. The catalysed reaction is 7-aminomethyl-7-carbaguanine + 2 NADP(+) = 7-cyano-7-deazaguanine + 2 NADPH + 3 H(+). The protein operates within tRNA modification; tRNA-queuosine biosynthesis. Its function is as follows. Catalyzes the NADPH-dependent reduction of 7-cyano-7-deazaguanine (preQ0) to 7-aminomethyl-7-deazaguanine (preQ1). The polypeptide is NADPH-dependent 7-cyano-7-deazaguanine reductase (Bacillus velezensis (strain DSM 23117 / BGSC 10A6 / LMG 26770 / FZB42) (Bacillus amyloliquefaciens subsp. plantarum)).